Here is a 146-residue protein sequence, read N- to C-terminus: Large ribosomal subunit protein uL15 (146 aa).

A compositionally biased stretch (basic and acidic residues) spans 1–13; sequence MKLHELYPAEGSR. Residues 1–55 form a disordered region; sequence MKLHELYPAEGSRKVRNRVGRGAATGNGKTSGRGQKGQKARSGGKVRPGFEGGQL. Residues 23 to 35 are compositionally biased toward gly residues; that stretch reads AATGNGKTSGRGQ.

It belongs to the universal ribosomal protein uL15 family. In terms of assembly, part of the 50S ribosomal subunit.

In terms of biological role, binds to the 23S rRNA. The polypeptide is Large ribosomal subunit protein uL15 (Staphylococcus carnosus (strain TM300)).